Reading from the N-terminus, the 687-residue chain is Chloride channel protein ClC-Ka (687 aa).

Transmembrane regions (helical) follow at residues 52–72 (FLMTLGVLMALVSYAMNFAIG), 161–181 (LFLGKVGPFVHLSVMIAAYLG), 202–222 (VAAAAVGVATVFAAPFSGVLF), and 236–256 (YWRGFFAATCGAFIFRLLAVF). Ca(2+) contacts are provided by Glu259, Glu261, Asp278, and Glu281. The next 6 helical transmembrane spans lie at 282 to 302 (IFFFVALGGICGVLSCAYLFC), 329 to 349 (ALATLLLASITYPPGVGHFLA), 396 to 416 (FTIFGTLAFFLVMKFWMLILA), 417 to 437 (TTIPMPAGYFMPIFILGAAIG), 452 to 472 (IVTGGVTNPIMPGGYALAGAA), and 486 to 506 (LLAFELTGQIVHALPVLMAVL). Over 507-687 (AANAIAQSCQ…SNLTNPPAPK (181 aa)) the chain is Cytoplasmic. CBS domains are found at residues 551-609 (MNHS…EPPS) and 626-684 (CPTE…TNPP).

This sequence belongs to the chloride channel (TC 2.A.49) family. CLCNKA subfamily. As to quaternary structure, homodimer. Interacts with BSND.

Its subcellular location is the basolateral cell membrane. It catalyses the reaction chloride(in) = chloride(out). The enzyme catalyses bromide(in) = bromide(out). The catalysed reaction is nitrate(in) = nitrate(out). It carries out the reaction iodide(out) = iodide(in). Activated by extracellular Ca(2+) and inhibited by extracellular acidic pH. Anion-selective channel permeable to small monovalent anions with ion selectivity for chloride &gt; bromide &gt; nitrate &gt; iodide. Forms a homodimeric channel where each subunit has its own ion conduction pathway. May conduct double-barreled currents controlled by two types of gates, two fast gates that control each subunit independently and a slow common gate that opens and shuts off both subunits simultaneously. Assembles with the regulatory subunit BSND/Barttin for sorting at the basolateral plasma membrane domain and functional switch to the ion conducting state. CLCNKA:BSND channels display mostly a linear current-voltage relationship with fast gating at negative potentials. Mediates transepithelial chloride transport from the lumen to interstitial compartment along the thin ascending limb of Henle's loop, contributing to generation of hypertonic medullary interstitium as a countercurrent system to achieve urine concentration. Conducts chloride currents in the stria vascularis of the inner ear to establish the endocochlear potential necessary for normal hearing. This is Chloride channel protein ClC-Ka from Homo sapiens (Human).